The primary structure comprises 99 residues: Cytochrome c2 iso-1 (99 aa).

The heme c site is built by cysteine 10, cysteine 13, histidine 14, and methionine 75.

It belongs to the cytochrome c family. In terms of processing, binds 1 heme c group covalently per subunit.

Its function is as follows. Cytochrome c2 is found mainly in purple, non-sulfur, photosynthetic bacteria where it functions as the electron donor to the oxidized bacteriochlorophyll in the photophosphorylation pathway. However, it may also have a role in the respiratory chain and is found in some non-photosynthetic bacteria. In Magnetospirillum fulvum (Rhodospirillum fulvum), this protein is Cytochrome c2 iso-1.